The primary structure comprises 34 residues: Corticostatin-2 (34 aa).

3 cysteine pairs are disulfide-bonded: C3-C32, C5-C21, and C11-C31.

It belongs to the alpha-defensin family.

The protein resides in the secreted. Microbicidal activity and inhibits corticotropin (ACTH) stimulated corticosterone production. The protein is Corticostatin-2 of Oryctolagus cuniculus (Rabbit).